Consider the following 807-residue polypeptide: Spondin-1 (807 aa).

The first 28 residues, 1–28 (MRLSPAPLKLSRTPALLALALPLAAALA), serve as a signal peptide directing secretion. Residues 29–194 (FSDETLDKVP…DSTFDGVTDK (166 aa)) form the Reelin domain. Disulfide bonds link Cys44–Cys128, Cys156–Cys182, Cys199–Cys336, Cys200–Cys340, Cys202–Cys415, Cys443–Cys480, Cys454–Cys489, Cys459–Cys494, Cys502–Cys538, Cys513–Cys517, Cys548–Cys554, Cys559–Cys595, Cys570–Cys574, Cys605–Cys610, Cys615–Cys650, Cys626–Cys630, and Cys660–Cys665. Residues 195–388 (PILDCCACGT…LTSLDHPQSP (194 aa)) form the Spondin domain. Asn214 is a glycosylation site (N-linked (GlcNAc...) asparagine). Ca(2+) is bound by residues Asp325, Asp354, and Asp358. 6 consecutive TSP type-1 domains span residues 442 to 495 (TCIY…PGCS), 501 to 555 (TCTM…EECS), 558 to 611 (SCLM…PECH), 614 to 666 (PCLL…PECP), 668 to 721 (DCEL…RKCL), and 754 to 806 (GCRM…NVHP). Trp448 carries C-linked (Man) tryptophan glycosylation. The C-linked (Man) tryptophan; partial glycan is linked to Trp451. Residue Trp507 is glycosylated (C-linked (Man) tryptophan). C-linked (Man) tryptophan; partial glycosylation occurs at Trp510. C-linked (Man) tryptophan glycosylation occurs at Trp564. Residue Trp620 is glycosylated (C-linked (Man) tryptophan; partial). Trp623 carries C-linked (Man) tryptophan glycosylation. The C-linked (Man) tryptophan glycan is linked to Trp674. Residue Asn681 is glycosylated (N-linked (GlcNAc...) asparagine).

In terms of assembly, binds to the central extracellular domain of APP and inhibits beta-secretase cleavage of APP. As to expression, highest expression in lung, lower expression in brain, heart, kidney, liver and testis, and lowest expression in pancreas, skeletal muscle and ovary. Not expressed in spleen.

The protein resides in the secreted. It localises to the extracellular space. It is found in the extracellular matrix. Functionally, cell adhesion protein that promotes the attachment of spinal cord and sensory neuron cells and the outgrowth of neurites in vitro. May contribute to the growth and guidance of axons in both the spinal cord and the PNS. Major factor for vascular smooth muscle cell. The polypeptide is Spondin-1 (SPON1) (Homo sapiens (Human)).